Consider the following 281-residue polypeptide: UPF0046 protein C25E10.12 (281 aa).

This sequence belongs to the UPF0046 family.

The protein is UPF0046 protein C25E10.12 of Caenorhabditis elegans.